Reading from the N-terminus, the 545-residue chain is CTP synthase (545 aa).

The interval 1-266 (MATNYIFVTG…DSFVCDRFRL (266 aa)) is amidoligase domain. Ser-14 serves as a coordination point for CTP. Ser-14 lines the UTP pocket. Residues 15 to 20 (SLGKGI) and Asp-72 contribute to the ATP site. Residues Asp-72 and Glu-140 each coordinate Mg(2+). CTP-binding positions include 147–149 (DIE), 187–192 (KTKPTQ), and Lys-223. Residues 187–192 (KTKPTQ) and Lys-223 contribute to the UTP site. 239–241 (KDV) provides a ligand contact to ATP. Residues 291-542 (TIGMVGKYVE…VAAAKAYQDS (252 aa)) enclose the Glutamine amidotransferase type-1 domain. Residue Gly-352 participates in L-glutamine binding. The active-site Nucleophile; for glutamine hydrolysis is Cys-379. Residues 380–383 (LGMQ), Glu-403, and Arg-470 contribute to the L-glutamine site. Catalysis depends on residues His-515 and Glu-517.

It belongs to the CTP synthase family. As to quaternary structure, homotetramer.

It catalyses the reaction UTP + L-glutamine + ATP + H2O = CTP + L-glutamate + ADP + phosphate + 2 H(+). It carries out the reaction L-glutamine + H2O = L-glutamate + NH4(+). The catalysed reaction is UTP + NH4(+) + ATP = CTP + ADP + phosphate + 2 H(+). It participates in pyrimidine metabolism; CTP biosynthesis via de novo pathway; CTP from UDP: step 2/2. Allosterically activated by GTP, when glutamine is the substrate; GTP has no effect on the reaction when ammonia is the substrate. The allosteric effector GTP functions by stabilizing the protein conformation that binds the tetrahedral intermediate(s) formed during glutamine hydrolysis. Inhibited by the product CTP, via allosteric rather than competitive inhibition. Catalyzes the ATP-dependent amination of UTP to CTP with either L-glutamine or ammonia as the source of nitrogen. Regulates intracellular CTP levels through interactions with the four ribonucleotide triphosphates. This is CTP synthase from Haemophilus ducreyi (strain 35000HP / ATCC 700724).